Consider the following 557-residue polypeptide: Dihydroxy-acid dehydratase (557 aa).

Residue Cys-47 coordinates [2Fe-2S] cluster. Residue Asp-79 participates in Mg(2+) binding. Cys-120 is a binding site for [2Fe-2S] cluster. 2 residues coordinate Mg(2+): Asp-121 and Lys-122. Lys-122 is subject to N6-carboxylysine. Cys-192 serves as a coordination point for [2Fe-2S] cluster. Glu-444 is a Mg(2+) binding site. The Proton acceptor role is filled by Ser-470.

It belongs to the IlvD/Edd family. In terms of assembly, homodimer. [2Fe-2S] cluster serves as cofactor. It depends on Mg(2+) as a cofactor.

It catalyses the reaction (2R)-2,3-dihydroxy-3-methylbutanoate = 3-methyl-2-oxobutanoate + H2O. The catalysed reaction is (2R,3R)-2,3-dihydroxy-3-methylpentanoate = (S)-3-methyl-2-oxopentanoate + H2O. It functions in the pathway amino-acid biosynthesis; L-isoleucine biosynthesis; L-isoleucine from 2-oxobutanoate: step 3/4. The protein operates within amino-acid biosynthesis; L-valine biosynthesis; L-valine from pyruvate: step 3/4. Functions in the biosynthesis of branched-chain amino acids. Catalyzes the dehydration of (2R,3R)-2,3-dihydroxy-3-methylpentanoate (2,3-dihydroxy-3-methylvalerate) into 2-oxo-3-methylpentanoate (2-oxo-3-methylvalerate) and of (2R)-2,3-dihydroxy-3-methylbutanoate (2,3-dihydroxyisovalerate) into 2-oxo-3-methylbutanoate (2-oxoisovalerate), the penultimate precursor to L-isoleucine and L-valine, respectively. In Parasynechococcus marenigrum (strain WH8102), this protein is Dihydroxy-acid dehydratase.